Here is a 356-residue protein sequence, read N- to C-terminus: Glutamine synthetase (356 aa).

The 81-residue stretch at 19 to 99 (IIAEYIWIGG…VMCDCYTPRG (81 aa)) folds into the GS beta-grasp domain. Residues 106-356 (KRYNAAKILS…IAQTTILWKP (251 aa)) form the GS catalytic domain.

The protein belongs to the glutamine synthetase family. In terms of assembly, homooctamer.

Its subcellular location is the cytoplasm. It carries out the reaction L-glutamate + NH4(+) + ATP = L-glutamine + ADP + phosphate + H(+). The polypeptide is Glutamine synthetase (Hordeum vulgare (Barley)).